A 711-amino-acid chain; its full sequence is Polyribonucleotide nucleotidyltransferase (711 aa).

Positions 486 and 492 each coordinate Mg(2+). The KH domain occupies 553–612 (PRIHTIKINPDKIKDVIGKGGSVIRALTEETGTTIEIEDDGTVKIAATDGDKAQHAIRRI). An S1 motif domain is found at 622–690 (GRIYNGKVTR…RQGRVRLSIK (69 aa)). The segment at 691 to 711 (EATEQTPSAAAPEAPVAEQGE) is disordered. The span at 699-711 (AAAPEAPVAEQGE) shows a compositional bias: low complexity.

It belongs to the polyribonucleotide nucleotidyltransferase family. In terms of assembly, component of the RNA degradosome, which is a multiprotein complex involved in RNA processing and mRNA degradation. Requires Mg(2+) as cofactor.

Its subcellular location is the cytoplasm. It carries out the reaction RNA(n+1) + phosphate = RNA(n) + a ribonucleoside 5'-diphosphate. In terms of biological role, involved in mRNA degradation. Catalyzes the phosphorolysis of single-stranded polyribonucleotides processively in the 3'- to 5'-direction. The polypeptide is Polyribonucleotide nucleotidyltransferase (Klebsiella pneumoniae (strain 342)).